The following is a 172-amino-acid chain: MDRTAKADLVSTLNGVFNESAVVVVAHYKGLTVADMQKLRAQMKQAGATVKVAKNSLAGIALDGTDVASIKPLLKGPTLLAYSGDPVAAAKVAVDFAKANDKLVILGGAMGKTALNPDGVKALASLPSLDELRAKIVGLVQAPATKIAQVVNAPASKLARVFGAYAKKDEAA.

It belongs to the universal ribosomal protein uL10 family. In terms of assembly, part of the ribosomal stalk of the 50S ribosomal subunit. The N-terminus interacts with L11 and the large rRNA to form the base of the stalk. The C-terminus forms an elongated spine to which L12 dimers bind in a sequential fashion forming a multimeric L10(L12)X complex.

Forms part of the ribosomal stalk, playing a central role in the interaction of the ribosome with GTP-bound translation factors. The protein is Large ribosomal subunit protein uL10 of Methylobacterium radiotolerans (strain ATCC 27329 / DSM 1819 / JCM 2831 / NBRC 15690 / NCIMB 10815 / 0-1).